The following is a 231-amino-acid chain: Ribosyldihydronicotinamide dehydrogenase [quinone] (231 aa).

Residues histidine 12, 18–21 (FNGS), and 104–107 (LYWF) each bind FAD. 127–129 (FDI) is a substrate binding site. Residues 148–151 (TTGG) and tyrosine 156 each bind FAD. Zn(2+)-binding residues include histidine 174 and histidine 178. Position 194 (aspartate 194) interacts with FAD. The residue at position 197 (serine 197) is a Phosphoserine. An FAD-binding site is contributed by arginine 201. Cysteine 223 contributes to the Zn(2+) binding site.

It belongs to the NAD(P)H dehydrogenase (quinone) family. In terms of assembly, homodimer. Zn(2+) is required as a cofactor. The cofactor is FAD.

The protein resides in the cytoplasm. The enzyme catalyses 1-(beta-D-ribofuranosyl)-1,4-dihydronicotinamide + a quinone + H(+) = beta-nicotinamide D-riboside + a quinol. In terms of biological role, the enzyme apparently serves as a quinone reductase in connection with conjugation reactions of hydroquinones involved in detoxification pathways as well as in biosynthetic processes such as the vitamin K-dependent gamma-carboxylation of glutamate residues in prothrombin synthesis. This chain is Ribosyldihydronicotinamide dehydrogenase [quinone] (Nqo2), found in Mus musculus (Mouse).